A 1845-amino-acid polypeptide reads, in one-letter code: Proteasome adapter and scaffold protein ECM29 (1845 aa).

An N-acetylalanine modification is found at Ala-2. 27 HEAT repeats span residues 28 to 65 (TDEQLQNIISKFLPPVLLKLSSTQEGVRKKVMELLVHL), 107 to 144 (YPRLPVEKQCELAPTLLTAMEGKPQPQQDSLMHLLIPT), 162 to 205 (NLAE…QGSS), 326 to 362 (RDPVSTRVKLKIVPHLLRSRQAAETFPANIQVVYDGL), 387 to 426 (PEIKIKPLGPMLLNGLTKLINEYKEDPKLLSMAYSAVGKL), 429 to 466 (RMPHLFTKDIALVQQLFEALCKEEPETRLAIQEALSMM), 469 to 507 (AYSTLEGAQRTLMEALVASYLIKPEVQVRQVAVKFASTV), 683 to 720 (YPEKLATKFVDKTEWIKSLMNNSKEEMRELAALFYSVV), 721 to 759 (VSTVSGNELKSMIEQLIKTTKDNHSPEIQHGSLLALGFT), 783 to 820 (TLPDQEELIQSATETIGSFLDSTSPLLAIAACTALGEI), 829 to 868 (PSEGSGFTKLHLVESLLSRIPSSKETNKMKERAIQTLGYF), 870 to 907 (VGDGDFPHQKLLLQGLMDSVEAKQIELQFTIGEAITSA), 931 to 969 (AGAKVNDVVPWVLDVILNKHIISPNPHVRQAACIWLLSL), 975 to 1012 (THKEVKSHLKEIQSAFVSVLSENDELSQDVASKGLGLV), 1013 to 1050 (YELGNEQDQQELVSTLVETLMTGKRVKHEVSGETVVFQ), 1112 to 1149 (AGEQLAPFLPQLVPRLYRYQFDPNLGIRQAMTSIWNAL), 1152 to 1189 (DKSMVDKYLKEILQDLVKNLTSNMWRVRESSCLALNDL), 1194 to 1231 (PLDDIIDKLPEIWETLFRVQDDIKESVRKAAELALKTL), 1243 to 1281 (KGAAGQRTIAALLPCLLDKGMMSTVTEVRALSINTLVKI), 1285 to 1323 (AGAMLKPHAPKLIPALLESLSVLEPQVLNYLSLRATEQE), 1348 to 1386 (LQYLDVSVLGELVPRLCELIRSGVGLGTKGGCASVIVSL), 1390 to 1427 (CPQDLTPYSGKLMSALLSGLTDRNSVIQKSCAFAMGHL), 1517 to 1554 (SFGGIRLYLQELITITQKALQSQSWKMKAQGAIAMASI), 1558 to 1595 (TSSLVPPYLGMILTALLQGLAGRTWAGKEELLKAIACV), 1605 to 1642 (KSVPNQPSTNEILQAVLKECSKENVKYKIVAISCAADI), 1646 to 1683 (TKEDRFQEFSNIVIPLIKKNSLESSGVRTTKNEEENEK), and 1779 to 1822 (TYSS…LATM). Positions 193-207 (QSRQNSSSAQGSSSN) are enriched in low complexity. A disordered region spans residues 193–217 (QSRQNSSSAQGSSSNSGGGSGIPQP). A Phosphoserine modification is found at Ser-830. Position 836 is a phosphothreonine (Thr-836). A Glycyl lysine isopeptide (Lys-Gly) (interchain with G-Cter in SUMO1) cross-link involves residue Lys-1039.

The protein belongs to the ECM29 family. Non-stoichiometric component of the proteasome; associates with the 26S proteasome. Interacts (via N-terminus) with VPS11, VPS26A, VPS36, RAB11FIP4 and RABEP1. Interacts (via C-terminus) with DCTN1, DCTN2, KIF5B, MYH7, MYH10, MYO10 and ARF6.

It localises to the endoplasmic reticulum. It is found in the endoplasmic reticulum-Golgi intermediate compartment. The protein localises to the endosome. Its subcellular location is the cytoplasm. The protein resides in the cytoskeleton. It localises to the microtubule organizing center. It is found in the centrosome. The protein localises to the nucleus. Its subcellular location is the multivesicular body. The protein resides in the cytoplasmic vesicle. In terms of biological role, adapter/scaffolding protein that binds to the 26S proteasome, motor proteins and other compartment specific proteins. May couple the proteasome to different compartments including endosome, endoplasmic reticulum and centrosome. May play a role in ERAD and other enhanced proteolysis. Promotes proteasome dissociation under oxidative stress. The protein is Proteasome adapter and scaffold protein ECM29 of Homo sapiens (Human).